Consider the following 252-residue polypeptide: uncharacterized protein (252 aa).

The ABC transporter domain maps to 13 to 247 (ITLENVNKWY…PKSERTRAFL (235 aa)). An ATP-binding site is contributed by 45–52 (GPSGSGKS).

The protein belongs to the ABC transporter superfamily.

It localises to the cell inner membrane. Its function is as follows. Probably part of a binding-protein-dependent transport system YdhWXYZ for an amino acid. Probably responsible for energy coupling to the transport system. This is an uncharacterized protein from Escherichia coli (strain K12).